We begin with the raw amino-acid sequence, 457 residues long: Bifunctional protein GlmU (457 aa).

The segment at 1-230 (MLNVVILAAG…SWETLGVNSR (230 aa)) is pyrophosphorylase. Residues 7-10 (LAAG), lysine 21, glutamine 73, 78-79 (GT), 104-106 (YGD), glycine 140, glutamate 155, asparagine 170, and asparagine 228 each bind UDP-N-acetyl-alpha-D-glucosamine. Aspartate 106 serves as a coordination point for Mg(2+). Asparagine 228 is a Mg(2+) binding site. Residues 231–251 (VQQAQLERAWQSELARRQLEA) form a linker region. The segment at 252-457 (GVTLADPARF…EGWKRPVKKS (206 aa)) is N-acetyltransferase. UDP-N-acetyl-alpha-D-glucosamine is bound by residues arginine 334 and lysine 352. The active-site Proton acceptor is the histidine 364. Tyrosine 367 and asparagine 378 together coordinate UDP-N-acetyl-alpha-D-glucosamine. Acetyl-CoA-binding positions include alanine 381, 387-388 (NY), serine 406, alanine 424, and arginine 441.

This sequence in the N-terminal section; belongs to the N-acetylglucosamine-1-phosphate uridyltransferase family. The protein in the C-terminal section; belongs to the transferase hexapeptide repeat family. In terms of assembly, homotrimer. Mg(2+) is required as a cofactor.

The protein localises to the cytoplasm. The catalysed reaction is alpha-D-glucosamine 1-phosphate + acetyl-CoA = N-acetyl-alpha-D-glucosamine 1-phosphate + CoA + H(+). It carries out the reaction N-acetyl-alpha-D-glucosamine 1-phosphate + UTP + H(+) = UDP-N-acetyl-alpha-D-glucosamine + diphosphate. The protein operates within nucleotide-sugar biosynthesis; UDP-N-acetyl-alpha-D-glucosamine biosynthesis; N-acetyl-alpha-D-glucosamine 1-phosphate from alpha-D-glucosamine 6-phosphate (route II): step 2/2. Its pathway is nucleotide-sugar biosynthesis; UDP-N-acetyl-alpha-D-glucosamine biosynthesis; UDP-N-acetyl-alpha-D-glucosamine from N-acetyl-alpha-D-glucosamine 1-phosphate: step 1/1. It functions in the pathway bacterial outer membrane biogenesis; LPS lipid A biosynthesis. Functionally, catalyzes the last two sequential reactions in the de novo biosynthetic pathway for UDP-N-acetylglucosamine (UDP-GlcNAc). The C-terminal domain catalyzes the transfer of acetyl group from acetyl coenzyme A to glucosamine-1-phosphate (GlcN-1-P) to produce N-acetylglucosamine-1-phosphate (GlcNAc-1-P), which is converted into UDP-GlcNAc by the transfer of uridine 5-monophosphate (from uridine 5-triphosphate), a reaction catalyzed by the N-terminal domain. The polypeptide is Bifunctional protein GlmU (Bordetella bronchiseptica (strain ATCC BAA-588 / NCTC 13252 / RB50) (Alcaligenes bronchisepticus)).